Here is a 249-residue protein sequence, read N- to C-terminus: Quinate/shikimate dehydrogenase (249 aa).

The substrate site is built by K32 and D68. NAD(+) contacts are provided by residues 93 to 96 (AGGA), 116 to 119 (NRRD), K166, 193 to 196 (CVYN), and G216.

Belongs to the shikimate dehydrogenase family. As to quaternary structure, homodimer.

The enzyme catalyses L-quinate + NAD(+) = 3-dehydroquinate + NADH + H(+). It carries out the reaction L-quinate + NADP(+) = 3-dehydroquinate + NADPH + H(+). The catalysed reaction is shikimate + NADP(+) = 3-dehydroshikimate + NADPH + H(+). It catalyses the reaction shikimate + NAD(+) = 3-dehydroshikimate + NADH + H(+). It functions in the pathway metabolic intermediate biosynthesis; chorismate biosynthesis; chorismate from D-erythrose 4-phosphate and phosphoenolpyruvate: step 4/7. Functionally, the actual biological function of YdiB remains unclear, nor is it known whether 3-dehydroshikimate or quinate represents the natural substrate. Catalyzes the reversible NAD-dependent reduction of both 3-dehydroshikimate (DHSA) and 3-dehydroquinate to yield shikimate (SA) and quinate, respectively. It can use both NAD or NADP for catalysis, however it has higher catalytic efficiency with NAD. The polypeptide is Quinate/shikimate dehydrogenase (Shigella flexneri serotype 5b (strain 8401)).